Consider the following 420-residue polypeptide: Gamma-glutamyl phosphate reductase (420 aa).

Belongs to the gamma-glutamyl phosphate reductase family.

The protein localises to the cytoplasm. The enzyme catalyses L-glutamate 5-semialdehyde + phosphate + NADP(+) = L-glutamyl 5-phosphate + NADPH + H(+). It participates in amino-acid biosynthesis; L-proline biosynthesis; L-glutamate 5-semialdehyde from L-glutamate: step 2/2. Catalyzes the NADPH-dependent reduction of L-glutamate 5-phosphate into L-glutamate 5-semialdehyde and phosphate. The product spontaneously undergoes cyclization to form 1-pyrroline-5-carboxylate. This chain is Gamma-glutamyl phosphate reductase, found in Chlorobaculum parvum (strain DSM 263 / NCIMB 8327) (Chlorobium vibrioforme subsp. thiosulfatophilum).